Here is a 593-residue protein sequence, read N- to C-terminus: Calnexin (593 aa).

A signal peptide spans 1–20 (MEGKWLLCMLLVLGTTIVQA). Residues 21–482 (HEGHDDDMID…QMIEAAEERP (462 aa)) lie on the Lumenal side of the membrane. Residues serine 75 and aspartate 118 each coordinate Ca(2+). Lysine 138 bears the N6-acetyllysine mark. Cysteine 161 and cysteine 195 are joined by a disulfide. 4 residues coordinate an alpha-D-glucoside: tyrosine 165, lysine 167, tyrosine 186, and aspartate 193. Residues 261 to 346 (GNLLNDMTPP…AEKPEDWDED (86 aa)) are disordered. Residues 277-410 (IEDPEDQKPE…RKIPNPDFFE (134 aa)) form a p domain (Extended arm) region. Repeat copies occupy residues 279 to 290 (DPEDQKPEDWDE), 296 to 307 (DPDAVKPDDWNE), 315 to 326 (DEEATKPDGWLD), 334 to 345 (DPDAEKPEDWDE), and 349 to 359 (GEWEAPQIANP). 4 X approximate repeats stretches follow at residues 279-345 (DPED…DWDE) and 349-406 (GEWE…IPNP). Over residues 282-320 (DQKPEDWDERPKIPDPDAVKPDDWNEDAPAKIPDEEATK) the composition is skewed to basic and acidic residues. Residues 324-346 (WLDDEPEYVPDPDAEKPEDWDED) are compositionally biased toward acidic residues. Residues 327–360 (DEPEYVPDPDAEKPEDWDEDMDGEWEAPQIANPK) form an interaction with PPIB region. Residues cysteine 361 and cysteine 367 are joined by a disulfide bond. 3 repeat units span residues 368-378 (GVWQRPMIDNP), 382-392 (GKWKPPMIDNP), and 396-406 (GIWKPRKIPNP). Glutamate 426 lines the an alpha-D-glucoside pocket. Aspartate 437 is a binding site for Ca(2+). Residues 483 to 503 (WLWVVYVLTVALPVFLVILFC) form a helical membrane-spanning segment. S-palmitoyl cysteine attachment occurs at residues cysteine 503 and cysteine 504. Residues 504–593 (CSGKKQSSPV…SPRNRKPRRE (90 aa)) are Cytoplasmic-facing. Residues 504 to 593 (CSGKKQSSPV…SPRNRKPRRE (90 aa)) form a sufficient to mediate interaction with SGIP1 region. The segment at 511–593 (SPVEYKKTDA…SPRNRKPRRE (83 aa)) is disordered. Over residues 526–548 (KEEEEEKEEEKDKGDEEEEGEEK) the composition is skewed to acidic residues. A Phosphoserine modification is found at serine 555. Residue threonine 563 is modified to Phosphothreonine. Serine 565 is modified (phosphoserine; by MAPK3). Residue serine 584 is modified to Phosphoserine.

Belongs to the calreticulin family. As to quaternary structure, interacts with MAPK3/ERK1. Interacts with KCNH2. Associates with ribosomes. Interacts with SGIP1; involved in negative regulation of endocytosis. The palmitoylated form interacts with the ribosome-translocon complex component SSR1, promoting efficient folding of glycoproteins. Interacts with SERPINA2P/SERPINA2 and with the S and Z variants of SERPINA1. Interacts with PPIB. Interacts with ZNRF4. Interacts with SMIM22. Interacts with TMX2. Interacts with TMEM35A/NACHO and CHRNA7. Interacts with reticulophagy regulators RETREG2 and RETREG3. Interacts with DNM1L; may form part of a larger protein complex at the ER-mitochondrial interface during mitochondrial fission. Interacts with ADAM7. In terms of processing, phosphorylated at Ser-565 by MAPK3/ERK1. Phosphorylation by MAPK3/ERK1 increases its association with ribosomes. Palmitoylation by DHHC6 leads to the preferential localization to the perinuclear rough ER. It mediates the association of calnexin with the ribosome-translocon complex (RTC) which is required for efficient folding of glycosylated proteins. Post-translationally, ubiquitinated, leading to proteasomal degradation. Probably ubiquitinated by ZNRF4.

The protein localises to the endoplasmic reticulum membrane. Its subcellular location is the mitochondrion membrane. It is found in the melanosome membrane. In terms of biological role, calcium-binding protein that interacts with newly synthesized monoglucosylated glycoproteins in the endoplasmic reticulum. It may act in assisting protein assembly and/or in the retention within the ER of unassembled protein subunits. It seems to play a major role in the quality control apparatus of the ER by the retention of incorrectly folded proteins. Associated with partial T-cell antigen receptor complexes that escape the ER of immature thymocytes, it may function as a signaling complex regulating thymocyte maturation. Additionally it may play a role in receptor-mediated endocytosis at the synapse. This is Calnexin (CANX) from Canis lupus familiaris (Dog).